Reading from the N-terminus, the 280-residue chain is Thymidylate synthase (280 aa).

Arg21 lines the dUMP pocket. Residue His51 participates in (6R)-5,10-methylene-5,6,7,8-tetrahydrofolate binding. Residue Arg142–Arg143 participates in dUMP binding. The active-site Nucleophile is Cys162. DUMP contacts are provided by residues Arg182–Asp185, Asn193, and His223–Tyr225. Asp185 serves as a coordination point for (6R)-5,10-methylene-5,6,7,8-tetrahydrofolate. Ala279 contacts (6R)-5,10-methylene-5,6,7,8-tetrahydrofolate.

It belongs to the thymidylate synthase family. Bacterial-type ThyA subfamily. As to quaternary structure, homodimer.

The protein resides in the cytoplasm. The enzyme catalyses dUMP + (6R)-5,10-methylene-5,6,7,8-tetrahydrofolate = 7,8-dihydrofolate + dTMP. Its pathway is pyrimidine metabolism; dTTP biosynthesis. In terms of biological role, catalyzes the reductive methylation of 2'-deoxyuridine-5'-monophosphate (dUMP) to 2'-deoxythymidine-5'-monophosphate (dTMP) while utilizing 5,10-methylenetetrahydrofolate (mTHF) as the methyl donor and reductant in the reaction, yielding dihydrofolate (DHF) as a by-product. This enzymatic reaction provides an intracellular de novo source of dTMP, an essential precursor for DNA biosynthesis. This chain is Thymidylate synthase, found in Acinetobacter baumannii (strain AB307-0294).